The chain runs to 222 residues: MLSRAVCGTGRQLAPALGYLGSRQKHSLPDLPYDYGALEPHINAQIMQLHHSKHHAAYVNNLNVTEEKYQEALAKGDVTAQIALQPALKFNGGGHINHSIFWTNLSPNGGGEPKGELLEAIKRDFGSFEKYKEKLTAASVGVQGSGWGWLGFNKERGQLQIAACLNQDPLQGTTGLIPLLGIDVWEHAYYLQYKNVRPDYLKAIWNVINWENVTERYMACKK.

A mitochondrion-targeting transit peptide spans 1-24; the sequence is MLSRAVCGTGRQLAPALGYLGSRQ. Residue His50 coordinates Mn(2+). Residue Tyr58 is modified to 3'-nitrotyrosine. N6-acetyllysine; alternate is present on residues Lys68 and Lys75. 2 positions are modified to N6-succinyllysine; alternate: Lys68 and Lys75. Residue His98 coordinates Mn(2+). Lys114 carries the N6-acetyllysine modification. An N6-acetyllysine; alternate mark is found at Lys122 and Lys130. An N6-succinyllysine; alternate mark is found at Lys122 and Lys130. Residues Asp183 and His187 each contribute to the Mn(2+) site. N6-acetyllysine is present on Lys202.

The protein belongs to the iron/manganese superoxide dismutase family. As to quaternary structure, homotetramer. Mn(2+) is required as a cofactor. Post-translationally, nitrated under oxidative stress. Nitration coupled with oxidation inhibits the catalytic activity. Acetylation at Lys-122 decreases enzymatic activity. Deacetylated by SIRT3 upon exposure to ionizing radiations or after long fasting. In terms of processing, polyubiquitinated; leading to proteasomal degradation. Deubiquitinated by USP36 which increases protein stability.

It is found in the mitochondrion matrix. It carries out the reaction 2 superoxide + 2 H(+) = H2O2 + O2. Functionally, destroys superoxide anion radicals which are normally produced within the cells and which are toxic to biological systems. This chain is Superoxide dismutase [Mn], mitochondrial (SOD2), found in Macaca nemestrina (Pig-tailed macaque).